The chain runs to 158 residues: D-aminoacyl-tRNA deacylase (158 aa).

The short motif at 144–145 (GP) is the Gly-cisPro motif, important for rejection of L-amino acids element.

The protein belongs to the DTD family. In terms of assembly, homodimer.

The protein resides in the cytoplasm. It catalyses the reaction glycyl-tRNA(Ala) + H2O = tRNA(Ala) + glycine + H(+). The catalysed reaction is a D-aminoacyl-tRNA + H2O = a tRNA + a D-alpha-amino acid + H(+). Its function is as follows. An aminoacyl-tRNA editing enzyme that deacylates mischarged D-aminoacyl-tRNAs. Also deacylates mischarged glycyl-tRNA(Ala), protecting cells against glycine mischarging by AlaRS. Acts via tRNA-based rather than protein-based catalysis; rejects L-amino acids rather than detecting D-amino acids in the active site. By recycling D-aminoacyl-tRNA to D-amino acids and free tRNA molecules, this enzyme counteracts the toxicity associated with the formation of D-aminoacyl-tRNA entities in vivo and helps enforce protein L-homochirality. In Corynebacterium kroppenstedtii (strain DSM 44385 / JCM 11950 / CIP 105744 / CCUG 35717), this protein is D-aminoacyl-tRNA deacylase.